A 429-amino-acid chain; its full sequence is Serine--tRNA ligase (429 aa).

Residue T236–E238 participates in L-serine binding. R267–E269 contributes to the ATP binding site. Position 290 (E290) interacts with L-serine. E354 to S357 contacts ATP. S390 is an L-serine binding site.

It belongs to the class-II aminoacyl-tRNA synthetase family. Type-1 seryl-tRNA synthetase subfamily. In terms of assembly, homodimer. The tRNA molecule binds across the dimer.

It localises to the cytoplasm. It carries out the reaction tRNA(Ser) + L-serine + ATP = L-seryl-tRNA(Ser) + AMP + diphosphate + H(+). The catalysed reaction is tRNA(Sec) + L-serine + ATP = L-seryl-tRNA(Sec) + AMP + diphosphate + H(+). Its pathway is aminoacyl-tRNA biosynthesis; selenocysteinyl-tRNA(Sec) biosynthesis; L-seryl-tRNA(Sec) from L-serine and tRNA(Sec): step 1/1. In terms of biological role, catalyzes the attachment of serine to tRNA(Ser). Is also able to aminoacylate tRNA(Sec) with serine, to form the misacylated tRNA L-seryl-tRNA(Sec), which will be further converted into selenocysteinyl-tRNA(Sec). This Alcanivorax borkumensis (strain ATCC 700651 / DSM 11573 / NCIMB 13689 / SK2) protein is Serine--tRNA ligase.